The sequence spans 161 residues: 6,7-dimethyl-8-ribityllumazine synthase (161 aa).

Residues tryptophan 26, 58-60, and 81-83 each bind 5-amino-6-(D-ribitylamino)uracil; these read SFE and VVI. Residue 86-87 participates in (2S)-2-hydroxy-3-oxobutyl phosphate binding; sequence GT. Histidine 89 (proton donor) is an active-site residue. Phenylalanine 114 contributes to the 5-amino-6-(D-ribitylamino)uracil binding site. A (2S)-2-hydroxy-3-oxobutyl phosphate-binding site is contributed by arginine 128.

This sequence belongs to the DMRL synthase family.

The enzyme catalyses (2S)-2-hydroxy-3-oxobutyl phosphate + 5-amino-6-(D-ribitylamino)uracil = 6,7-dimethyl-8-(1-D-ribityl)lumazine + phosphate + 2 H2O + H(+). It participates in cofactor biosynthesis; riboflavin biosynthesis; riboflavin from 2-hydroxy-3-oxobutyl phosphate and 5-amino-6-(D-ribitylamino)uracil: step 1/2. Functionally, catalyzes the formation of 6,7-dimethyl-8-ribityllumazine by condensation of 5-amino-6-(D-ribitylamino)uracil with 3,4-dihydroxy-2-butanone 4-phosphate. This is the penultimate step in the biosynthesis of riboflavin. In Streptomyces coelicolor (strain ATCC BAA-471 / A3(2) / M145), this protein is 6,7-dimethyl-8-ribityllumazine synthase.